A 447-amino-acid chain; its full sequence is Probable glycine dehydrogenase (decarboxylating) subunit 1 (447 aa).

The protein belongs to the GcvP family. N-terminal subunit subfamily. In terms of assembly, the glycine cleavage system is composed of four proteins: P, T, L and H. In this organism, the P 'protein' is a heterodimer of two subunits.

The catalysed reaction is N(6)-[(R)-lipoyl]-L-lysyl-[glycine-cleavage complex H protein] + glycine + H(+) = N(6)-[(R)-S(8)-aminomethyldihydrolipoyl]-L-lysyl-[glycine-cleavage complex H protein] + CO2. Its function is as follows. The glycine cleavage system catalyzes the degradation of glycine. The P protein binds the alpha-amino group of glycine through its pyridoxal phosphate cofactor; CO(2) is released and the remaining methylamine moiety is then transferred to the lipoamide cofactor of the H protein. The chain is Probable glycine dehydrogenase (decarboxylating) subunit 1 from Metallosphaera sedula (strain ATCC 51363 / DSM 5348 / JCM 9185 / NBRC 15509 / TH2).